The chain runs to 963 residues: Kinesin-1 heavy chain (963 aa).

Alanine 2 carries the post-translational modification N-acetylalanine. Residues 8 to 325 (NIKVMCRFRP…LLFGQRAKTI (318 aa)) form the Kinesin motor domain. 85–92 (GQTSSGKT) is an ATP binding site. Lysine 213 is covalently cross-linked (Glycyl lysine isopeptide (Lys-Gly) (interchain with G-Cter in SUMO2)). A coiled-coil region spans residues 329–914 (VCVNVELTAE…AVRSKNMARR (586 aa)). Positions 908–963 (SKNMARRGHSAQIAKPIRPGQHPAASPTHPGTVRGGGSFVQNNQPVGLRGGGGKQS) are disordered. Positions 915 to 963 (GHSAQIAKPIRPGQHPAASPTHPGTVRGGGSFVQNNQPVGLRGGGGKQS) are globular. 2 positions are modified to phosphoserine: serine 933 and serine 945. Position 956 is an omega-N-methylarginine (arginine 956).

Belongs to the TRAFAC class myosin-kinesin ATPase superfamily. Kinesin family. Kinesin subfamily. In terms of assembly, oligomer composed of two heavy chains and two light chains. Interacts with GRIP1 and PPP1R42. Interacts with SYBU. Interacts with JAKMIP1. Interacts with PLEKHM2. Interacts with ECPAS. Interacts with ZFYVE27. Found in a complex with OGT, RHOT1, RHOT2 and TRAK1. Interacts with APP (via cytoplasmic domain).

It is found in the cytoplasm. Its subcellular location is the cytoskeleton. It localises to the cytolytic granule membrane. The protein localises to the lysosome membrane. Functionally, microtubule-dependent motor required for normal distribution of mitochondria and lysosomes. May be involved in the mechanisms of growth arrest induced by exposure to DNA-damaging drugs or by cellular senescence. Can induce formation of neurite-like membrane protrusions in non-neuronal cells in a ZFYVE27-dependent manner. Regulates centrosome and nuclear positioning during mitotic entry. During the G2 phase of the cell cycle in a BICD2-dependent manner, antagonizes dynein function and drives the separation of nuclei and centrosomes. Required for anterograde axonal transportation of MAPK8IP3/JIP3 which is essential for MAPK8IP3/JIP3 function in axon elongation. Through binding with PLEKHM2 and ARL8B, directs lysosome movement toward microtubule plus ends. Involved in NK cell-mediated cytotoxicity. Drives the polarization of cytolytic granules and microtubule-organizing centers (MTOCs) toward the immune synapse between effector NK lymphocytes and target cells. This Mus musculus (Mouse) protein is Kinesin-1 heavy chain (Kif5b).